We begin with the raw amino-acid sequence, 74 residues long: ATP synthase subunit c (74 aa).

Helical transmembrane passes span 8-28 (FIGVGLMAIGMYGAALGVSNI) and 52-72 (IGAGLAEAIGLFSFVIAMLLI).

This sequence belongs to the ATPase C chain family. As to quaternary structure, F-type ATPases have 2 components, F(1) - the catalytic core - and F(0) - the membrane proton channel. F(1) has five subunits: alpha(3), beta(3), gamma(1), delta(1), epsilon(1). F(0) has three main subunits: a(1), b(2) and c(10-14). The alpha and beta chains form an alternating ring which encloses part of the gamma chain. F(1) is attached to F(0) by a central stalk formed by the gamma and epsilon chains, while a peripheral stalk is formed by the delta and b chains.

The protein resides in the cell inner membrane. In terms of biological role, f(1)F(0) ATP synthase produces ATP from ADP in the presence of a proton or sodium gradient. F-type ATPases consist of two structural domains, F(1) containing the extramembraneous catalytic core and F(0) containing the membrane proton channel, linked together by a central stalk and a peripheral stalk. During catalysis, ATP synthesis in the catalytic domain of F(1) is coupled via a rotary mechanism of the central stalk subunits to proton translocation. Functionally, key component of the F(0) channel; it plays a direct role in translocation across the membrane. A homomeric c-ring of between 10-14 subunits forms the central stalk rotor element with the F(1) delta and epsilon subunits. The chain is ATP synthase subunit c from Rickettsia canadensis (strain McKiel).